Consider the following 474-residue polypeptide: Cysteine--tRNA ligase (474 aa).

Cys-27 is a binding site for Zn(2+). The short motif at 29–39 is the 'HIGH' region element; it reads PTVYNYIHIGN. Residues Cys-212, His-237, and Glu-241 each contribute to the Zn(2+) site. The 'KMSKS' region signature appears at 271 to 275; that stretch reads KMSKS. Residue Lys-274 coordinates ATP.

The protein belongs to the class-I aminoacyl-tRNA synthetase family. As to quaternary structure, monomer. It depends on Zn(2+) as a cofactor.

The protein resides in the cytoplasm. The enzyme catalyses tRNA(Cys) + L-cysteine + ATP = L-cysteinyl-tRNA(Cys) + AMP + diphosphate. The sequence is that of Cysteine--tRNA ligase from Lactobacillus delbrueckii subsp. bulgaricus (strain ATCC 11842 / DSM 20081 / BCRC 10696 / JCM 1002 / NBRC 13953 / NCIMB 11778 / NCTC 12712 / WDCM 00102 / Lb 14).